The following is a 69-amino-acid chain: UPF0346 protein llmg_2280 (69 aa).

It belongs to the UPF0346 family.

The chain is UPF0346 protein llmg_2280 from Lactococcus lactis subsp. cremoris (strain MG1363).